We begin with the raw amino-acid sequence, 305 residues long: Leucine-rich repeat-containing protein 25 (305 aa).

Positions 1 to 20 (MGGTLAWTLLLPLLLRESDS) are cleaved as a signal peptide. The Extracellular segment spans residues 21–165 (LEPSCTVSSA…SCAPGLASAT (145 aa)). LRR repeat units lie at residues 39–59 (SATCLNFSGLSLSLPHNQSLR), 62–83 (NVILLDLSGNGLRELPVTFFAH), and 86–107 (KLEVLNVLRNPLSRVDGALAAR). N-linked (GlcNAc...) asparagine glycans are attached at residues N44 and N55. Residues N130 and N148 are each glycosylated (N-linked (GlcNAc...) asparagine). Residues 166 to 186 (IGAVVVSGCLLLGLAIAGPVL) form a helical membrane-spanning segment. The Cytoplasmic portion of the chain corresponds to 187 to 305 (AWRLWRCRVA…DEEEYVIPGH (119 aa)). Residues 204 to 229 (PWAAQDGPKPGLGLQPRYGSRSAPKP) are disordered. Y284 carries the phosphotyrosine modification.

In terms of assembly, interacts with RIGI. Interacts with SQSTM1. Interacts with p65/RELA; this interaction promotes the degradation of RELA through autophagy. Expressed in plasmacytoid dendritic cells (PDC), monocyte-derived dendritic cells (MDDC), granulocytes, monocytes, B-lymphocytes, peripheral blood leukocytes, spleen, bone marrow, and, to a lesser extent, lymph nodes, fetal liver, and appendix but not in thymus.

The protein resides in the membrane. It localises to the cytoplasm. Plays a role in the inhibition of RLR-mediated type I interferon signaling pathway by targeting RIGI for autophagic degradation. Interacts specifically with ISG15-associated RIGI to promote interaction between RIGI and the autophagic cargo receptor p62/SQSTM1 to mediate RIGI degradation via selective autophagy. Also plays a role in the inhibition of NF-kappa-B signaling pathway and inflammatory response by promoting the degradation of p65/RELA. In Homo sapiens (Human), this protein is Leucine-rich repeat-containing protein 25 (LRRC25).